Here is a 117-residue protein sequence, read N- to C-terminus: uncharacterized protein (117 aa).

This is an uncharacterized protein from Saccharomyces cerevisiae (strain ATCC 204508 / S288c) (Baker's yeast).